We begin with the raw amino-acid sequence, 318 residues long: EFRASIPQNVQIEAIDPHTARMTWDPPAKSYGSIIGYTIQWSTDDLWLEQVKVASDNSYDFKDLQSQQTIVASILAHHRPDTSVKFEYIGTRSTPVKVTTPLPSRVMKKPSFRATYCEDLEELDMLIHDPEEVVGMFGGFEVLMRAGDAELLKSWQSVVNLTAEERRYKLKGLVPSLPYAVTVRGVALPSRRFSELAEPVHFKISRAEQSVPQNVDMQATDPHTIEMTWDCRPNPTVALLATPSAGVAITRSSRSLHLASVQLYTFTGLEPQVSLSASICVHYKPQKSPNFEYISSFSEVVTATTPSVEQVDFAEGEE.

Fibronectin type-III domains lie at 6-103 (IPQN…TPLP), 109-207 (KPSF…ISRA), and 211-308 (VPQN…TPSV).

This is Oncosphere antigen A (ONCA) from Hydatigena taeniaeformis (Feline tapeworm).